The primary structure comprises 447 residues: Putative metabolite transport protein HI_0418 (447 aa).

Topologically, residues 1–28 (MCKPQQKHYGRQVMNTQNSLKQVATATM) are cytoplasmic. The helical transmembrane segment at 29-49 (VGTAIEYFDNYIYAMAAVLVF) threads the bilayer. Topologically, residues 50–63 (NHQFFHAVDPLSGQ) are periplasmic. The chain crosses the membrane as a helical span at residues 64-84 (IAALSTLALTFIARPLGAILF). At 85 to 96 (GHFGDRFGRKNT) the chain is on the cytoplasmic side. The chain crosses the membrane as a helical span at residues 97 to 117 (FVMSLLLMGISTVVIGLLPTY). Residues 118 to 119 (DS) lie on the Periplasmic side of the membrane. A helical transmembrane segment spans residues 120–140 (IGIWATILLCLCRIGQGIGLG). Over 141-167 (GEWGGAALVAVENAPEGKRGWYGTFPQ) the chain is Cytoplasmic. Residues 168–188 (LGAPLGLLLANGVFLGITAIF) form a helical membrane-spanning segment. The Periplasmic segment spans residues 189 to 194 (GQEAMT). Residues 195 to 215 (EWAWRIPFLSSVILVAIGLYV) traverse the membrane as a helical segment. Residues 216–249 (RLKLTEAPIFLAALNKPKPKRLPMLEVVTTHFKP) are Cytoplasmic-facing. A helical membrane pass occupies residues 250-270 (FFLGMLVCIAGYVLFYIMIAF). The Periplasmic segment spans residues 271–295 (SQIYAKSAPTVSEAGYAMGLGFSPQ). Residues 296 to 316 (IFTALLMASAVSLAITIAASG) form a helical membrane-spanning segment. Residues 317–325 (KYIDKIGRR) are Cytoplasmic-facing. A helical membrane pass occupies residues 326–346 (TWLIWTTVGVAIFGLSLPLFL). Over 347–354 (ENGTTTSL) the chain is Periplasmic. Residues 355-375 (FWFLFIGMGLIGMGYGPLASF) traverse the membrane as a helical segment. Topologically, residues 376 to 390 (LPELFPTHARYSGAS) are cytoplasmic. A helical transmembrane segment spans residues 391-411 (LTYNIAGLFGASVAAIIALPL). The Periplasmic segment spans residues 412–418 (NAHYGLK). A helical transmembrane segment spans residues 419–439 (GVGIYLTLNAVLSLVGLWFIS). Residues 440–447 (ETKDKLLS) are Cytoplasmic-facing.

Belongs to the major facilitator superfamily. Metabolite:H+ Symporter (MHS) family (TC 2.A.1.6) family.

It localises to the cell inner membrane. The chain is Putative metabolite transport protein HI_0418 from Haemophilus influenzae (strain ATCC 51907 / DSM 11121 / KW20 / Rd).